Here is a 370-residue protein sequence, read N- to C-terminus: Queuine tRNA-ribosyltransferase (370 aa).

Asp-93 serves as the catalytic Proton acceptor. Residues 93-97 (DSGGF), Asp-147, Gln-189, and Gly-216 contribute to the substrate site. Positions 247-253 (GVGSPDC) are RNA binding. Asp-266 functions as the Nucleophile in the catalytic mechanism. Residues 271 to 275 (TRIAR) are RNA binding; important for wobble base 34 recognition. 4 residues coordinate Zn(2+): Cys-304, Cys-306, Cys-309, and His-335.

The protein belongs to the queuine tRNA-ribosyltransferase family. In terms of assembly, homodimer. Within each dimer, one monomer is responsible for RNA recognition and catalysis, while the other monomer binds to the replacement base PreQ1. Zn(2+) serves as cofactor.

The catalysed reaction is 7-aminomethyl-7-carbaguanine + guanosine(34) in tRNA = 7-aminomethyl-7-carbaguanosine(34) in tRNA + guanine. Its pathway is tRNA modification; tRNA-queuosine biosynthesis. Functionally, catalyzes the base-exchange of a guanine (G) residue with the queuine precursor 7-aminomethyl-7-deazaguanine (PreQ1) at position 34 (anticodon wobble position) in tRNAs with GU(N) anticodons (tRNA-Asp, -Asn, -His and -Tyr). Catalysis occurs through a double-displacement mechanism. The nucleophile active site attacks the C1' of nucleotide 34 to detach the guanine base from the RNA, forming a covalent enzyme-RNA intermediate. The proton acceptor active site deprotonates the incoming PreQ1, allowing a nucleophilic attack on the C1' of the ribose to form the product. After dissociation, two additional enzymatic reactions on the tRNA convert PreQ1 to queuine (Q), resulting in the hypermodified nucleoside queuosine (7-(((4,5-cis-dihydroxy-2-cyclopenten-1-yl)amino)methyl)-7-deazaguanosine). This chain is Queuine tRNA-ribosyltransferase, found in Pelotomaculum thermopropionicum (strain DSM 13744 / JCM 10971 / SI).